We begin with the raw amino-acid sequence, 979 residues long: MHC class II regulatory factor RFX1 (979 aa).

Disordered stretches follow at residues 1–136, 181–227, and 370–405; these read MATQ…QVVQ, QSAA…PTGT, and TSTG…STGG. Pro residues predominate over residues 12–44; it reads APPPSQPPQAPPQAQPQPPPPPPPAAPQPPQPP. The segment covering 45–73 has biased composition (low complexity); that stretch reads TAAATPQPQYVTELQSPQPQAQPPGGQKQ. Residue Ser-60 is modified to Phosphoserine. A compositionally biased stretch (pro residues) spans 81-96; sequence VPAPSQPTGAPTPSPA. The span at 114–126 shows a compositional bias: polar residues; the sequence is ETVSEASPGSTAS. Positions 127–136 are enriched in low complexity; sequence QTGVPTQVVQ. Polar residues-rich tracts occupy residues 190–203 and 209–220; these read GQVS…QQVH and SPVQANSSSSKT. Residues 370–379 show a composition bias toward low complexity; that stretch reads TSTGAGASNS. Over residues 380–405 the composition is skewed to gly residues; sequence SGGGGSGGGGGGGGGGGGGGSGSTGG. Positions 438 to 513 form a DNA-binding region, RFX-type winged-helix; the sequence is TVQWLLDNYE…YHYYGLRIKA (76 aa). The segment at 744–979 is necessary for dimerization; that stretch reads FAQTLRRYTS…GLFVQALPSS (236 aa). The disordered stretch occupies residues 915-960; sequence SLNPLDPDKDEEEEEEEESEDELPQDISLAAGGESPALGPETLEPP. Positions 922-938 are enriched in acidic residues; it reads DKDEEEEEEEESEDELP. 2 positions are modified to phosphoserine: Ser-978 and Ser-979.

It belongs to the RFX family. Homodimer; binds DNA as a homodimer. Heterodimer; heterodimerizes with RFX2 and RFX3.

The protein localises to the nucleus. Its function is as follows. Regulatory factor essential for MHC class II genes expression. Binds to the X boxes of MHC class II genes. Also binds to an inverted repeat (ENH1) required for hepatitis B virus genes expression and to the most upstream element (alpha) of the RPL30 promoter. The protein is MHC class II regulatory factor RFX1 (RFX1) of Homo sapiens (Human).